We begin with the raw amino-acid sequence, 418 residues long: Trans-acting enoyl reductase (418 aa).

It belongs to the saccharopine dehydrogenase family. Enoyl reductase subfamily.

Involved in the reduction of the double bond between C-4 and C-5 during phthiocerol dimycocerosates (DIM A) and glycosylated phenolphthiocerol dimycocerosates (PGL) biosynthesis. The sequence is that of Trans-acting enoyl reductase from Mycobacterium ulcerans (strain Agy99).